The primary structure comprises 919 residues: Transcriptional regulatory protein EDS1 (919 aa).

Residues 1–54 form a disordered region; that stretch reads MSHHVPNLYGTPIRDPHEHKRNSASMGEVNQSVSSRNCERGSEKGTKQRKKASR. Positions 23-36 are enriched in polar residues; the sequence is SASMGEVNQSVSSR. Over residues 37–46 the composition is skewed to basic and acidic residues; sequence NCERGSEKGT. Positions 56–85 form a DNA-binding region, zn(2)-C6 fungal-type; that stretch reads CDQCRRKRIKCRFDKHTGVCQGCLEVGEKC. The disordered stretch occupies residues 297–338; it reads AGCPNKKLGTDGRSDKWDKNSTWKPVYRSSNPSHPSTEKNVS. Over residues 304 to 317 the composition is skewed to basic and acidic residues; the sequence is LGTDGRSDKWDKNS. The segment covering 318 to 338 has biased composition (polar residues); sequence TWKPVYRSSNPSHPSTEKNVS.

Binds DNA in a sequence-specific manner.

The protein resides in the nucleus. This chain is Transcriptional regulatory protein EDS1 (EDS1), found in Saccharomyces cerevisiae (strain Lalvin EC1118 / Prise de mousse) (Baker's yeast).